A 166-amino-acid chain; its full sequence is Bacterial microcompartment shell protein EutK (166 aa).

The BMC domain occupies 4–88; it reads ALGLLEVDGM…PDDDTQWLVT (85 aa). Positions 109 to 165 constitute a EutK-Ctail domain; the sequence is ESADELLALLTSVRQGMTAGEVAAHFGWPLEKARNALEQLFSAGTLRKRSSRYRLKP.

The protein belongs to the bacterial microcompartments protein family. In terms of assembly, monomeric in solution.

The protein resides in the bacterial microcompartment. The protein operates within amine and polyamine degradation; ethanolamine degradation. Its function is as follows. Probably a minor component of the bacterial microcompartment (BMC) shell dedicated to ethanolamine degradation. It might bind nucleic acids. The sequence is that of Bacterial microcompartment shell protein EutK (eutK) from Escherichia coli (strain K12).